The primary structure comprises 370 residues: Vasopressin V2 receptor (370 aa).

Residues 1–28 (MLRATTSAVPRALSWPAAPGNGSEREPL) are disordered. The Extracellular portion of the chain corresponds to 1–37 (MLRATTSAVPRALSWPAAPGNGSEREPLDDRDPLLAR). An N-linked (GlcNAc...) asparagine glycan is attached at N21. A helical membrane pass occupies residues 38–62 (VELALLSTVFVAVALSNGLVLGALV). Over 63 to 76 (RRGRRGRWAPMHVF) the chain is Cytoplasmic. Residues 77 to 97 (IGHLCLADLAVALFQVLPQLA) form a helical membrane-spanning segment. Topologically, residues 98-112 (WDATYRFRGPDALCR) are extracellular. Residues 113-134 (AVKYLQMVGMYASSYMILAMTL) form a helical membrane-spanning segment. Residues 135–158 (DRHRAICRPMLAYRHGGGARWNRP) are Cytoplasmic-facing. The helical transmembrane segment at 159-179 (VLVAWAFSLLLSLPQLFIFAQ) threads the bilayer. Topologically, residues 180 to 199 (RDVGDGSGVLDCWASFAEPW) are extracellular. The chain crosses the membrane as a helical span at residues 200–219 (GLRAYVTWIALMVFVAPALG). At 220-270 (IAACQVLIFREIHTSLVPGPAERAGGHRGGRRAGSPREGARVSAAMAKTAR) the chain is on the cytoplasmic side. The chain crosses the membrane as a helical span at residues 271–292 (MTLVIVAVYVLCWAPFFLVQLW). At 293-307 (SVWDPKAPREGPPFV) the chain is on the extracellular side. Residues 308-327 (LLMLLASLNSCTNPWIYASF) traverse the membrane as a helical segment. The Cytoplasmic portion of the chain corresponds to 328–370 (SSSISSELRSLLCCPRRRTPPSLRPQEESCATASSFSARDTSS). S-palmitoyl cysteine attachment occurs at residues C340 and C341. Positions 347–370 (PPSLRPQEESCATASSFSARDTSS) are disordered. A compositionally biased stretch (polar residues) spans 356 to 370 (SCATASSFSARDTSS).

This sequence belongs to the G-protein coupled receptor 1 family. Vasopressin/oxytocin receptor subfamily. As to quaternary structure, interacts with ARRDC4. Identified in a complex containing at least ARRDC4, V2R and HGS. Interacts with TMEM147.

The protein resides in the cell membrane. Functionally, receptor for arginine vasopressin. The activity of this receptor is mediated by G proteins which activate adenylate cyclase. Involved in renal water reabsorption. The chain is Vasopressin V2 receptor (AVPR2) from Sus scrofa (Pig).